The following is a 173-amino-acid chain: Streptothricin acetyltransferase A (173 aa).

The N-acetyltransferase domain maps to 21-173 (VVFGRMIPAF…EIAIFWYYKF (153 aa)).

Belongs to the acetyltransferase family. GNAT subfamily. As to quaternary structure, homodimer.

It carries out the reaction streptothricin D + acetyl-CoA = N(beta)-acetylstreptothricin D + CoA + H(+). It catalyses the reaction streptothricin F + acetyl-CoA = N(beta)-acetylstreptothricin F + CoA + H(+). In terms of biological role, involved in resistance to streptothricin, a broad-spectrum antibiotic produced by streptomycetes. Detoxifies streptothricin via acetylation of the beta amino group of the first beta-lysyl moiety of streptothricin. The chain is Streptothricin acetyltransferase A from Bacillus subtilis (strain 168).